The following is an 829-amino-acid chain: Leucine--tRNA ligase (829 aa).

Positions 40–51 (PYPSGAGLHVGH) match the 'HIGH' region motif. The 'KMSKS' region motif lies at 609-613 (KMSKS). Lys612 provides a ligand contact to ATP.

It belongs to the class-I aminoacyl-tRNA synthetase family.

It is found in the cytoplasm. It carries out the reaction tRNA(Leu) + L-leucine + ATP = L-leucyl-tRNA(Leu) + AMP + diphosphate. The chain is Leucine--tRNA ligase from Lactococcus lactis subsp. lactis (strain IL1403) (Streptococcus lactis).